Consider the following 1762-residue polypeptide: Kinase D-interacting substrate of 220 kDa (1762 aa).

Residues 1-508 are Cytoplasmic-facing; that stretch reads MSVLISQSVI…WLIVFLTLLL (508 aa). ANK repeat units follow at residues 45-74, 78-107, 111-140, 145-174, 178-207, 211-240, 244-273, 277-306, 310-339, 343-372, and 376-405; these read AAEQGNVEIVKELLKNGANCNLEDLDNWTA, ASKEGHIHIVEELLKSGASLEHRDMGGWTA, ACYKGRTDVVELLLSHGANPSVTGLYSVYP, AGRGHADIVHLLLQNGAKVNCSDKYGTTPL, ARKGHLECVKHLLAMGADVDQEGANSMTAL, VKGGYTQSVKEILKRNPNVNLTDKDGNTAL, SKEGHIEIVQDLLDAGTYVNIPDRSGDTVL, VRGGHVEIVRALLQKYADIDIRGQDNKTAL, VEKGNATMVRDILQCNPDTEICTKDGETPL, TKMRNIEVVELLLDKGAKVSAVDKKGDTPL, and IRGRSRRLAELLLRNPKDGRLLYRPNKAGE. The KAP NTPase domain maps to 440-953; sequence YDLYSSALAD…NIVSVTGRLL (514 aa). The chain crosses the membrane as a helical span at residues 509-529; that stretch reads CGGLGLVFAFTVDTNLAIAIS. The Extracellular portion of the chain corresponds to 530 to 533; sequence LSFL. The chain crosses the membrane as a helical span at residues 534–554; the sequence is ALIYIFFIVIYFGGRREGESW. Over 555–668 the chain is Cytoplasmic; the sequence is NWAWALSTRL…SFVIFLFIVG (114 aa). The chain crosses the membrane as a helical span at residues 669–689; sequence CIIAGITLLAIFRVDPKHLTV. Topologically, residues 690–696 are extracellular; the sequence is NAILISI. A helical transmembrane segment spans residues 697 to 717; the sequence is ASVVGLAFVLNCRTWWQVLDS. Residues 718 to 1680 are Cytoplasmic-facing; sequence LLNSQRKRLH…TPSTVTLNNN (963 aa). Phosphoserine occurs at positions 882 and 885. The residue at position 914 (threonine 914) is a Phosphothreonine. Position 918 is a phosphoserine; by PKD (serine 918). The mediates interaction with CRKL stretch occupies residues 1089–1092; that stretch reads PRPP. 7 positions are modified to phosphoserine: serine 1163, serine 1288, serine 1344, serine 1351, serine 1353, serine 1354, and serine 1357. 4 disordered regions span residues 1279–1305, 1336–1358, 1390–1440, and 1452–1556; these read DPRFLNENSSAPVPHGESARRSSHTEL, RHSNLSWQSQTRRTPSLSSLNSQ, EGGT…DGRK, and YSSS…EPIR. Residues 1338 to 1350 are compositionally biased toward polar residues; the sequence is SNLSWQSQTRRTP. Residues 1395-1422 show a composition bias toward low complexity; sequence SSTISGRSSPHSTYYIGQSSSGGSIHST. The span at 1423-1440 shows a compositional bias: basic and acidic residues; the sequence is LEQERGKEGELKQEDGRK. Residues 1452–1462 are compositionally biased toward polar residues; it reads YSSSGVSTNEA. 4 positions are modified to phosphoserine: serine 1513, serine 1518, serine 1547, and serine 1566. Residues 1514-1524 show a composition bias toward acidic residues; the sequence is DEDESGTEESD. Residues 1529–1553 are compositionally biased toward basic and acidic residues; the sequence is LKDDKDKKAEGKAERVCKSPEHSAE. Residues 1571-1628 form a disordered region; the sequence is DKKDSSDSGVRSNESSPNHSLHNEAADDSQLEKANLIELEDEGHSGKRGMPHSLSGLQ. Residues 1579–1590 show a composition bias toward polar residues; sequence GVRSNESSPNHS. Phosphoserine is present on residues serine 1615 and serine 1625. A Phosphothreonine modification is found at threonine 1671. Serine 1673 carries the phosphoserine modification. Threonine 1676 carries the post-translational modification Phosphothreonine. Residues 1704 to 1762 form a disordered region; that stretch reads ILRPGPSPNPTAVQNENLKSMAHKRSQRSSYTRLSKDASELHAASSESTGFGEERESIL. The short motif at 1757 to 1762 is the PDZ-binding element; that stretch reads ERESIL.

In terms of assembly, found in a complex, at least composed of KIDINS220, MAGI2, NTRK1 and RAPGEF2; the complex is mainly formed at late endosomes in a nerve growth factor (NGF)-dependent manner. Interacts with RAPGEF2; the interaction is strengthened after NGF stimulation. Isoform 2 interacts (via C-terminal domain) with MAGI2 isoform 1 (via PDZ domain). Interacts with NTRK1, NTRK2, NTRK3, ERKL and NGFR. Can form a ternary complex with NGFR and NTRK1 and this complex is affected by the expression levels of KIDINS220/ARMS. An increase in KIDINS220/ARMS expression leads to a decreased association of NGFR and NTRK1. Interacts (via PDZ-binding motif) with SNTA1 and SNTB2 (via PDZ domains). Interacts with EPHA4 and PRKD1. In terms of processing, tyrosine phosphorylated by NTRK1, NTRK2, EPHB2 and EPHA4. Phosphorylation at Ser-918 is induced by phorbol ester treatment. Phosphorylation by NTRK2 is induced by brain-derived neurotrophic factor (BDNF) and neurotrophin-4/5. Phosphorylation by NTRK1 is induced by nerve growth factor (NGF). In terms of tissue distribution, expressed in developing nervous system and in highly plastic areas of the adult brain. Also expressed in neuroendocrine cells, where it concentrates at the tip of neurites. Expressed in developing muscle and is concentrated at the neuromuscular junction (NMS). SNTA1 can regulate its localization in the NMS.

The protein resides in the membrane. Its subcellular location is the late endosome. In terms of biological role, promotes a prolonged MAP-kinase signaling by neurotrophins through activation of a Rap1-dependent mechanism. Provides a docking site for the CRKL-C3G complex, resulting in Rap1-dependent sustained ERK activation. May play an important role in regulating postsynaptic signal transduction through the syntrophin-mediated localization of receptor tyrosine kinases such as EPHA4. In cooperation with SNTA1 can enhance EPHA4-induced JAK/STAT activation. Plays a role in nerve growth factor (NGF)-induced recruitment of RAPGEF2 to late endosomes and neurite outgrowth. May play a role in neurotrophin- and ephrin-mediated neuronal outgrowth and in axon guidance during neural development and in neuronal regeneration. This Rattus norvegicus (Rat) protein is Kinase D-interacting substrate of 220 kDa (Kidins220).